The sequence spans 297 residues: Calponin-1 (297 aa).

Positions 28–131 (HQREQELREW…STLLALASMA (104 aa)) constitute a Calponin-homology (CH) domain. S48 carries the phosphoserine modification. Calponin-like repeat units follow at residues 164–189 (IGLQ…RHLY), 204–229 (ISLQ…RQIF), and 243–268 (VSLQ…RQVY). Residue T170 is modified to Phosphothreonine; by ROCK2. S175 carries the phosphoserine; by ROCK2 modification. Phosphothreonine; by ROCK2 occurs at positions 180 and 184. At T259 the chain carries Phosphothreonine; by ROCK2.

Belongs to the calponin family. In terms of assembly, part of cGMP kinase signaling complex at least composed of ACTA2/alpha-actin, CNN1/calponin H1, PLN/phospholamban, PRKG1 and ITPR1. Smooth muscle, and tissues containing significant amounts of smooth muscle.

Its function is as follows. Thin filament-associated protein that is implicated in the regulation and modulation of smooth muscle contraction. It is capable of binding to actin, calmodulin and tropomyosin. The interaction of calponin with actin inhibits the actomyosin Mg-ATPase activity. In Rattus norvegicus (Rat), this protein is Calponin-1 (Cnn1).